Reading from the N-terminus, the 324-residue chain is 7,8-didemethyl-8-hydroxy-5-deazariboflavin synthase (324 aa).

One can recognise a Radical SAM core domain in the interval 4–239; that stretch reads VTYSKNVFIP…QEVAIQIPPN (236 aa). [4Fe-4S] cluster contacts are provided by Cys-18, Cys-22, and Cys-25.

This sequence belongs to the radical SAM superfamily. CofG family. In terms of assembly, consists of two subunits, CofG and CofH. The cofactor is [4Fe-4S] cluster.

The catalysed reaction is 5-amino-5-(4-hydroxybenzyl)-6-(D-ribitylimino)-5,6-dihydrouracil + S-adenosyl-L-methionine = 7,8-didemethyl-8-hydroxy-5-deazariboflavin + 5'-deoxyadenosine + L-methionine + NH4(+) + H(+). Its pathway is cofactor biosynthesis; coenzyme F0 biosynthesis. Functionally, catalyzes the radical-mediated synthesis of 7,8-didemethyl-8-hydroxy-5-deazariboflavin from 5-amino-5-(4-hydroxybenzyl)-6-(D-ribitylimino)-5,6-dihydrouracil. In Archaeoglobus fulgidus (strain ATCC 49558 / DSM 4304 / JCM 9628 / NBRC 100126 / VC-16), this protein is 7,8-didemethyl-8-hydroxy-5-deazariboflavin synthase.